The following is a 424-amino-acid chain: Gamma-glutamyl phosphate reductase (424 aa).

The protein belongs to the gamma-glutamyl phosphate reductase family.

The protein localises to the cytoplasm. The catalysed reaction is L-glutamate 5-semialdehyde + phosphate + NADP(+) = L-glutamyl 5-phosphate + NADPH + H(+). It participates in amino-acid biosynthesis; L-proline biosynthesis; L-glutamate 5-semialdehyde from L-glutamate: step 2/2. Its function is as follows. Catalyzes the NADPH-dependent reduction of L-glutamate 5-phosphate into L-glutamate 5-semialdehyde and phosphate. The product spontaneously undergoes cyclization to form 1-pyrroline-5-carboxylate. This chain is Gamma-glutamyl phosphate reductase, found in Halorhodospira halophila (strain DSM 244 / SL1) (Ectothiorhodospira halophila (strain DSM 244 / SL1)).